A 718-amino-acid chain; its full sequence is LON peptidase N-terminal domain and RING finger protein 3 (718 aa).

The tract at residues Met1–Val69 is disordered. Residues Glu57–Glu66 show a composition bias toward polar residues. The stretch at Ser67 to Val100 is one TPR 1 repeat. The segment at Cys158–Gly196 adopts an RING-type 1 zinc-finger fold. TPR repeat units lie at residues Ala243 to Asp276 and Leu278 to Gly310. A disordered region spans residues Ser322 to Ser413. Positions Ala339–Asp352 are enriched in basic and acidic residues. The segment at Cys426–Lys464 adopts an RING-type 2 zinc-finger fold. The region spanning Met505 to Ser714 is the Lon N-terminal domain.

In Macaca fascicularis (Crab-eating macaque), this protein is LON peptidase N-terminal domain and RING finger protein 3 (LONRF3).